Here is a 521-residue protein sequence, read N- to C-terminus: Aspartic proteinase yapsin-1 (521 aa).

The first 17 residues, 1–17 (MRIWILIFFSFIKLVSS), serve as a signal peptide directing secretion. The Extracellular segment spans residues 18–500 (LQYTGNGVLA…NAVANAGNSF (483 aa)). Residues 67–409 (YTTTLSIGRP…HQSQKMIAIG (343 aa)) enclose the Peptidase A1 domain. Residue Asp-85 is part of the active site. N-linked (GlcNAc...) asparagine glycans are attached at residues Asn-136, Asn-157, Asn-250, Asn-289, Asn-295, Asn-354, Asn-414, Asn-418, Asn-460, and Asn-484. A helical transmembrane segment spans residues 501–521 (SPLSAMVIMMMSAVFLGLGII).

Belongs to the peptidase A1 family.

The protein localises to the endoplasmic reticulum membrane. It localises to the secreted. The protein resides in the cell wall. Its function is as follows. Cleaves at paired basic residues. The protein is Aspartic proteinase yapsin-1 (yps1) of Schizosaccharomyces pombe (strain 972 / ATCC 24843) (Fission yeast).